Here is a 115-residue protein sequence, read N- to C-terminus: Large ribosomal subunit protein uL23 (115 aa).

The protein belongs to the universal ribosomal protein uL23 family. In terms of assembly, part of the 50S ribosomal subunit. Contacts protein L29, and trigger factor when it is bound to the ribosome.

In terms of biological role, one of the early assembly proteins it binds 23S rRNA. One of the proteins that surrounds the polypeptide exit tunnel on the outside of the ribosome. Forms the main docking site for trigger factor binding to the ribosome. The polypeptide is Large ribosomal subunit protein uL23 (Granulibacter bethesdensis (strain ATCC BAA-1260 / CGDNIH1)).